The chain runs to 193 residues: MTEEQKPTSEKSVKRKSNTYWEWGKAIIIAVALALLIRHFLFEPYLVEGSSMYPTLHDGERLFVNKSVNYIGEIERGDIVIINGDTSKVHYVKRLIGKPGETVEMKNDTLYINGKKIAEPYLASNKKEAKKLGVNLTGDFGPVKVPKGKYFVMGDNRLNSMDSRNGLGLIAENRIVGTSKFVFFPFHDMRQTK.

At 1 to 25 (MTEEQKPTSEKSVKRKSNTYWEWGK) the chain is on the cytoplasmic side. Residues 26–42 (AIIIAVALALLIRHFLF) form a helical membrane-spanning segment. The Extracellular portion of the chain corresponds to 43-193 (EPYLVEGSSM…FPFHDMRQTK (151 aa)). Active-site residues include serine 51 and lysine 93.

It belongs to the peptidase S26 family.

Its subcellular location is the cell membrane. The enzyme catalyses Cleavage of hydrophobic, N-terminal signal or leader sequences from secreted and periplasmic proteins.. The polypeptide is Signal peptidase I (sipS2) (Bacillus amyloliquefaciens (Bacillus velezensis)).